The following is a 349-amino-acid chain: uncharacterized protein (349 aa).

A signal peptide spans 1 to 25 (MNKYIKQGAPILGILLAVMFGGREG).

It belongs to the bacterial solute-binding protein 1 family. WtpA subfamily.

This is an uncharacterized protein from Methanococcus aeolicus (strain ATCC BAA-1280 / DSM 17508 / OCM 812 / Nankai-3).